Reading from the N-terminus, the 251-residue chain is Probable transcriptional regulatory protein SYO3AOP1_0685 (251 aa).

This sequence belongs to the TACO1 family.

Its subcellular location is the cytoplasm. The polypeptide is Probable transcriptional regulatory protein SYO3AOP1_0685 (Sulfurihydrogenibium sp. (strain YO3AOP1)).